A 272-amino-acid polypeptide reads, in one-letter code: 3-hydroxyanthranilate 3,4-dioxygenase (272 aa).

The segment at 1–154 (MMEWIDENSS…SEEHKTGKPS (154 aa)) is domain A (catalytic). Arg38 provides a ligand contact to O2. Fe cation contacts are provided by His42, Glu48, and His86. Glu48 lines the substrate pocket. The substrate site is built by Arg90 and Glu100. Positions 155–169 (KESSCSINVDTETEL) are linker. The interval 170–272 (MEPFPLKQWL…SITVDSLANK (103 aa)) is domain B.

Belongs to the 3-HAO family. Requires Fe(2+) as cofactor.

The protein localises to the cytoplasm. The catalysed reaction is 3-hydroxyanthranilate + O2 = (2Z,4Z)-2-amino-3-carboxymuconate 6-semialdehyde. It functions in the pathway cofactor biosynthesis; NAD(+) biosynthesis; quinolinate from L-kynurenine: step 3/3. In terms of biological role, catalyzes the oxidative ring opening of 3-hydroxyanthranilate to 2-amino-3-carboxymuconate semialdehyde, which spontaneously cyclizes to quinolinate. This chain is 3-hydroxyanthranilate 3,4-dioxygenase, found in Nematostella vectensis (Starlet sea anemone).